Reading from the N-terminus, the 443-residue chain is Ribosomal protein uS12 methylthiotransferase RimO (443 aa).

In terms of domain architecture, MTTase N-terminal spans 5–116 (PSVAVAHLGC…IVDVIQRAEA (112 aa)). 6 residues coordinate [4Fe-4S] cluster: C14, C50, C79, C154, C158, and C161. Positions 140 to 370 (TTTEGTAYVR…ALQQPISWQQ (231 aa)) constitute a Radical SAM core domain. The TRAM domain occupies 372–442 (QQEVGKTVQV…AYDLQGQLVS (71 aa)).

The protein belongs to the methylthiotransferase family. RimO subfamily. It depends on [4Fe-4S] cluster as a cofactor.

Its subcellular location is the cytoplasm. It catalyses the reaction L-aspartate(89)-[ribosomal protein uS12]-hydrogen + (sulfur carrier)-SH + AH2 + 2 S-adenosyl-L-methionine = 3-methylsulfanyl-L-aspartate(89)-[ribosomal protein uS12]-hydrogen + (sulfur carrier)-H + 5'-deoxyadenosine + L-methionine + A + S-adenosyl-L-homocysteine + 2 H(+). Its function is as follows. Catalyzes the methylthiolation of an aspartic acid residue of ribosomal protein uS12. In Acaryochloris marina (strain MBIC 11017), this protein is Ribosomal protein uS12 methylthiotransferase RimO.